Here is a 304-residue protein sequence, read N- to C-terminus: Olfactory receptor 8G2 (304 aa).

The Extracellular portion of the chain corresponds to 1 to 41 (MVFLSSVETDQRKMSAGNHSSVTEFILAGLSEQPELQLRLF). N18 carries an N-linked (GlcNAc...) asparagine glycan. Residues 42 to 62 (LLFLGIYVVTVVGNLSMITLI) traverse the membrane as a helical segment. The Cytoplasmic segment spans residues 63-69 (GLSSHLH). A helical membrane pass occupies residues 70–90 (TPMYYFLSGLSFIDLCHSTII). At 91–110 (TPKMLVNFVTEKNIISYPEC) the chain is on the extracellular side. Cysteines 110 and 192 form a disulfide. The helical transmembrane segment at 111-130 (MTQLYFFLIFAIAECHMLAV) threads the bilayer. Over 131–154 (TAYDRYVAICSPLLYNVIMSYHHC) the chain is Cytoplasmic. The chain crosses the membrane as a helical span at residues 155 to 175 (FWLTVGVYVLGILGSTIHTGF). Residues 176–193 (MLRLFLCKTNVINHYFCD) lie on the Extracellular side of the membrane. The chain crosses the membrane as a helical span at residues 194 to 214 (LFPLLGLSCSSTYINELLVLV). The Cytoplasmic portion of the chain corresponds to 215 to 217 (LSA). Residues 218-238 (FNILTPALTILASYIFIIASI) traverse the membrane as a helical segment. Residues 239 to 257 (LRIRSTEGRSKAFSTCSSH) lie on the Extracellular side of the membrane. Residues 258-278 (ILAVAVFFGSAAFMYLQPSSV) traverse the membrane as a helical segment. The Cytoplasmic segment spans residues 279-304 (SSMDQRKVSSVFYTTIVPMLNPQSIA).

This sequence belongs to the G-protein coupled receptor 1 family.

The protein localises to the cell membrane. Its function is as follows. Odorant receptor. The sequence is that of Olfactory receptor 8G2 from Homo sapiens (Human).